The chain runs to 200 residues: Putative AgrB-like protein (200 aa).

5 consecutive transmembrane segments (helical) span residues 49 to 69 (LIIT…LVFM), 88 to 108 (LLCT…IQFT), 114 to 134 (LFRF…SPAV), 148 to 168 (ALKH…FLVS), and 171 to 191 (LGTI…PLKG).

The protein belongs to the AgrB family.

The protein resides in the cell membrane. In terms of biological role, may be involved in the proteolytic processing of a quorum sensing system signal molecule precursor. This Lactiplantibacillus plantarum (strain ATCC BAA-793 / NCIMB 8826 / WCFS1) (Lactobacillus plantarum) protein is Putative AgrB-like protein.